The primary structure comprises 287 residues: Bifunctional protein FolD (287 aa).

NADP(+)-binding positions include 166–168 (GAS), serine 191, and isoleucine 232.

The protein belongs to the tetrahydrofolate dehydrogenase/cyclohydrolase family. Homodimer.

It carries out the reaction (6R)-5,10-methylene-5,6,7,8-tetrahydrofolate + NADP(+) = (6R)-5,10-methenyltetrahydrofolate + NADPH. It catalyses the reaction (6R)-5,10-methenyltetrahydrofolate + H2O = (6R)-10-formyltetrahydrofolate + H(+). The protein operates within one-carbon metabolism; tetrahydrofolate interconversion. Functionally, catalyzes the oxidation of 5,10-methylenetetrahydrofolate to 5,10-methenyltetrahydrofolate and then the hydrolysis of 5,10-methenyltetrahydrofolate to 10-formyltetrahydrofolate. The chain is Bifunctional protein FolD from Haemophilus ducreyi (strain 35000HP / ATCC 700724).